A 579-amino-acid chain; its full sequence is Nuclear hormone receptor family member nhr-47 (579 aa).

Positions 8–83 (GTLCAVCDDI…VGMDKNSIQN (76 aa)) form a DNA-binding region, nuclear receptor. 2 NR C4-type zinc fingers span residues 11–31 (CAVC…CNGC) and 47–71 (CQGN…LQKC). The interval 87-128 (RIGYTKRKRRHDDNDMEGGVHHSEHIRDGSSGSPQMNDESPE) is disordered. Residues 104 to 114 (GGVHHSEHIRD) show a composition bias toward basic and acidic residues. In terms of domain architecture, NR LBD spans 164-553 (ADLHSYATLE…SLVKETSLGP (390 aa)).

This sequence belongs to the nuclear hormone receptor family.

It is found in the nucleus. Functionally, orphan nuclear receptor. In Caenorhabditis elegans, this protein is Nuclear hormone receptor family member nhr-47 (nhr-47).